Here is a 481-residue protein sequence, read N- to C-terminus: UDP-glycosyltransferase 72E2 (481 aa).

His18 acts as the Proton acceptor in catalysis. His18 contributes to the an anthocyanidin binding site. The active-site Charge relay is the Asp111. Residues Ala346, Gln348, His363, Trp366, Ser368, and Glu371 each contribute to the UDP-alpha-D-glucose site. Ala386 provides a ligand contact to an anthocyanidin. UDP-alpha-D-glucose contacts are provided by Glu387 and Gln388.

The protein belongs to the UDP-glycosyltransferase family. As to expression, expressed in seedlings and roots.

The enzyme catalyses (E)-4-coumarate + UDP-alpha-D-glucose = 4-O-(beta-D-glucosyl)-trans-4-coumarate + UDP + H(+). It catalyses the reaction (E)-coniferol + UDP-alpha-D-glucose = 4-O-(beta-D-glucosyl)-(E)-coniferol + UDP + H(+). The catalysed reaction is (E)-sinapyl alcohol + UDP-alpha-D-glucose = 4-O-(beta-D-glucosyl)-trans-4-sinapoyl alcohol + UDP + H(+). It carries out the reaction (E)-sinapate + UDP-alpha-D-glucose = 4-O-(beta-D-glucosyl)-trans-sinapate + UDP + H(+). The enzyme catalyses (E)-coniferaldehyde + UDP-alpha-D-glucose = 4-O-(beta-D-glucosyl)-4-(E)-coniferyl aldehyde + UDP + H(+). It catalyses the reaction (E)-sinapaldehyde + UDP-alpha-D-glucose = 4-O-(beta-D-glucosyl)-4-trans-sinapoyl aldehyde + UDP + H(+). Functionally, involved in the O-glucosylation of monolignols (alcohol monomers of lignin). Glucosylates coniferyl alcohol to form coniferyl alcohol 4-O-glucoside. Glucosylates sinapyl alcohol to form sinapyl alcohol 4-O-glucoside. Glucosylates coniferyl aldehyde to form coniferyl aldehyde 4-O-glucoside. Glucosylates sinapyl aldehyde to form sinapyl aldehyde 4-O-glucoside. Possesses low activity with sinapate and ferulate as substrates. The polypeptide is UDP-glycosyltransferase 72E2 (Arabidopsis thaliana (Mouse-ear cress)).